A 581-amino-acid chain; its full sequence is DNA primase (581 aa).

The segment at C40–C64 adopts a CHC2-type zinc-finger fold. One can recognise a Toprim domain in the interval N259–P341. Mg(2+) contacts are provided by E265, D309, and D311.

Belongs to the DnaG primase family. In terms of assembly, monomer. Interacts with DnaB. Zn(2+) is required as a cofactor. Mg(2+) serves as cofactor.

The catalysed reaction is ssDNA + n NTP = ssDNA/pppN(pN)n-1 hybrid + (n-1) diphosphate.. Functionally, RNA polymerase that catalyzes the synthesis of short RNA molecules used as primers for DNA polymerase during DNA replication. This is DNA primase from Escherichia coli O6:H1 (strain CFT073 / ATCC 700928 / UPEC).